Reading from the N-terminus, the 475-residue chain is uncharacterized protein (475 aa).

The protein to E.coli YihN.

This is an uncharacterized protein from Mycoplasma pneumoniae (strain ATCC 29342 / M129 / Subtype 1) (Mycoplasmoides pneumoniae).